Consider the following 178-residue polypeptide: Bifunctional protein PyrR (178 aa).

The short motif at 99 to 111 is the PRPP-binding element; it reads VILVDDVLFTGRT.

It belongs to the purine/pyrimidine phosphoribosyltransferase family. PyrR subfamily. In terms of assembly, homodimer and homohexamer; in equilibrium.

It catalyses the reaction UMP + diphosphate = 5-phospho-alpha-D-ribose 1-diphosphate + uracil. In terms of biological role, regulates transcriptional attenuation of the pyrimidine nucleotide (pyr) operon by binding in a uridine-dependent manner to specific sites on pyr mRNA. This disrupts an antiterminator hairpin in the RNA and favors formation of a downstream transcription terminator, leading to a reduced expression of downstream genes. Its function is as follows. Also displays a weak uracil phosphoribosyltransferase activity which is not physiologically significant. In Limosilactobacillus reuteri subsp. reuteri (strain JCM 1112) (Lactobacillus reuteri), this protein is Bifunctional protein PyrR.